Consider the following 168-residue polypeptide: ATP synthase F(1) complex subunit delta, mitochondrial (168 aa).

Residues 1–22 (MLPASLLRHPGLRRLMLQARTY) constitute a mitochondrion transit peptide. K136 and K165 each carry N6-acetyllysine; alternate. 2 positions are modified to N6-succinyllysine; alternate: K136 and K165.

Belongs to the ATPase epsilon chain family. As to quaternary structure, component of the ATP synthase complex composed at least of ATP5F1A/subunit alpha, ATP5F1B/subunit beta, ATP5MC1/subunit c (homooctomer), MT-ATP6/subunit a, MT-ATP8/subunit 8, ATP5ME/subunit e, ATP5MF/subunit f, ATP5MG/subunit g, ATP5MK/subunit k, ATP5MJ/subunit j, ATP5F1C/subunit gamma, ATP5F1D/subunit delta, ATP5F1E/subunit epsilon, ATP5PF/subunit F6, ATP5PB/subunit b, ATP5PD/subunit d, ATP5PO/subunit OSCP. ATP synthase complex consists of a soluble F(1) head domain (subunits alpha(3) and beta(3)) - the catalytic core - and a membrane F(0) domain - the membrane proton channel (subunits c, a, 8, e, f, g, k and j). These two domains are linked by a central stalk (subunits gamma, delta, and epsilon) rotating inside the F1 region and a stationary peripheral stalk (subunits F6, b, d, and OSCP). Component of a complex composed at least by ATPIF1, ATP5F1A, ATP5F1B, ATP5F1C AND ATP5F1E.

The protein resides in the mitochondrion. It is found in the mitochondrion inner membrane. In terms of biological role, subunit delta, of the mitochondrial membrane ATP synthase complex (F(1)F(0) ATP synthase or Complex V) that produces ATP from ADP in the presence of a proton gradient across the membrane which is generated by electron transport complexes of the respiratory chain. ATP synthase complex consist of a soluble F(1) head domain - the catalytic core - and a membrane F(1) domain - the membrane proton channel. These two domains are linked by a central stalk rotating inside the F(1) region and a stationary peripheral stalk. During catalysis, ATP synthesis in the catalytic domain of F(1) is coupled via a rotary mechanism of the central stalk subunits to proton translocation. In vivo, can only synthesize ATP although its ATP hydrolase activity can be activated artificially in vitro. With the central stalk subunit gamma, is essential for the biogenesis of F(1) catalytic part of the ATP synthase complex namely in the formation of F1 assembly intermediate. This Mus musculus (Mouse) protein is ATP synthase F(1) complex subunit delta, mitochondrial.